We begin with the raw amino-acid sequence, 777 residues long: Glucocorticoid receptor (777 aa).

Positions 1 to 14 (MDSKESLTPGREEN) are enriched in basic and acidic residues. Residues 1-23 (MDSKESLTPGREENPSSVLAQER) are disordered. Residues 1–420 (MDSKESLTPG…TATTGPPPKL (420 aa)) are modulating. The residue at position 8 (T8) is a Phosphothreonine. An Omega-N-methylarginine modification is found at R23. S45, S113, S134, and S141 each carry phosphoserine. Polar residues predominate over residues 130 to 140 (NRSTSVPENPK). A disordered region spans residues 130 to 183 (NRSTSVPENPKSSASTAVSAAPTEKEFPKTHSDISSEQQHLKGQTGTNGGNVKL). The span at 141–150 (SSASTAVSAA) shows a compositional bias: low complexity. Residues 152–163 (TEKEFPKTHSDI) show a composition bias toward basic and acidic residues. Over residues 164-174 (SSEQQHLKGQT) the composition is skewed to polar residues. Residues S203, S211, and S226 each carry the phosphoserine modification. A Glycyl lysine isopeptide (Lys-Gly) (interchain with G-Cter in SUMO2) cross-link involves residue K258. Position 267 is a phosphoserine (S267). Residues K277 and K293 each participate in a glycyl lysine isopeptide (Lys-Gly) (interchain with G-Cter in SUMO); alternate cross-link. Residues K277 and K293 each participate in a glycyl lysine isopeptide (Lys-Gly) (interchain with G-Cter in SUMO2); alternate cross-link. Low complexity predominate over residues 394 to 414 (SSPSMRPDVSSPPSSSSTATT). Positions 394–415 (SSPSMRPDVSSPPSSSSTATTG) are disordered. At S404 the chain carries Phosphoserine. Residue K419 forms a Glycyl lysine isopeptide (Lys-Gly) (interchain with G-Cter in ubiquitin) linkage. 2 consecutive NR C4-type zinc fingers follow at residues 421–441 (CLVCSDEASGCHYGVLTCGSC) and 457–476 (CAGRNDCIIDKIRRKNCPAC). The segment at residues 421 to 486 (CLVCSDEASG…RYRKCLQAGM (66 aa)) is a DNA-binding region (nuclear receptor). K480, K492, K494, and K495 each carry N6-acetyllysine. The segment at 485-777 (GMNLEARKTK…NIKKLLFHQK (293 aa)) is interaction with CLOCK. The interval 487–523 (NLEARKTKKKIKGIQQATTGVSQETPENPANKTIVPA) is hinge. Residues 524 to 758 (TLPQLTPTLV…FPEMLAEIIT (235 aa)) enclose the NR LBD domain. The segment at 532–697 (LVSLLEVIEP…EIRMTYIKEL (166 aa)) is interaction with CRY1. K703 participates in a covalent cross-link: Glycyl lysine isopeptide (Lys-Gly) (interchain with G-Cter in SUMO).

This sequence belongs to the nuclear hormone receptor family. NR3 subfamily. Heteromultimeric cytoplasmic complex with HSP90AA1, HSPA1A/HSPA1B, and FKBP5 or another immunophilin such as PPID, STIP1, or the immunophilin homolog PPP5C. Upon ligand binding FKBP5 dissociates from the complex and FKBP4 takes its place, thereby linking the complex to dynein and mediating transport to the nucleus, where the complex dissociates. Probably forms a complex composed of chaperones HSP90 and HSP70, co-chaperones CDC37, PPP5C, TSC1 and client protein TSC2, CDK4, AKT, RAF1 and NR3C1; this complex does not contain co-chaperones STIP1/HOP and PTGES3/p23. Directly interacts with UNC45A. Binds to DNA as a homodimer, and as heterodimer with NR3C2 or the retinoid X receptor. Binds STAT5A and STAT5B homodimers and heterodimers. Interacts with NRIP1, POU2F1, POU2F2 and TRIM28. Interacts with several coactivator complexes, including the SMARCA4 complex, CREBBP/EP300, TADA2L (Ada complex) and p160 coactivators such as NCOA2 and NCOA6. Interaction with BAG1 inhibits transactivation. Interacts with HEXIM1 and TGFB1I1. Interacts with NCOA1. Interacts with NCOA3, SMARCA4, SMARCC1, SMARCD1, and SMARCE1. Interacts with CLOCK, CRY1 and CRY2 in a ligand-dependent fashion. Interacts with CIART. Interacts with RWDD3. Interacts with UBE2I/UBC9 and this interaction is enhanced in the presence of RWDD3. Interacts with GRIP1. Interacts with NR4A3 (via nuclear receptor DNA-binding domain), represses transcription activity of NR4A3 on the POMC promoter Nur response element (NurRE). Directly interacts with PNRC2 to attract and form a complex with UPF1 and DCP1A; the interaction leads to rapid mRNA degradation. Interacts with GSK3B. Interacts with FNIP1 and FNIP2. Interacts (via C-terminus) with HNRNPU (via C-terminus). Interacts with MCM3AP. Interacts (via domain NR LBD) with HSP90AA1 and HSP90AB1. In the absence of hormonal ligand, interacts with TACC1. Interacts (via NR LBD domain) with ZNF764 (via KRAB domain); the interaction regulates transcription factor activity of NR3C1 by directing its actions toward certain biologic pathways. Post-translationally, acetylation by CLOCK reduces its binding to glucocorticoid response elements and its transcriptional activity. In terms of processing, increased proteasome-mediated degradation in response to glucocorticoids. Phosphorylated in the absence of hormone; becomes hyperphosphorylated in the presence of glucocorticoid. The Ser-203, Ser-226 and Ser-404-phosphorylated forms are mainly cytoplasmic, and the Ser-211-phosphorylated form is nuclear. Phosphorylation at Ser-211 increases transcriptional activity. Phosphorylation at Ser-203, Ser-226 and Ser-404 decreases signaling capacity. Phosphorylation at Ser-404 may protect from glucocorticoid-induced apoptosis. Phosphorylation at Ser-203 and Ser-211 is not required in regulation of chromosome segregation. May be dephosphorylated by PPP5C, attenuates NR3C1 action. Post-translationally, ubiquitinated by UBR5, leading to its degradation: UBR5 specifically recognizes and binds ligand-bound NR3C1 when it is not associated with coactivators (NCOAs). In presence of NCOAs, the UBR5-degron is not accessible, preventing its ubiquitination and degradation. In terms of processing, sumoylation at Lys-277 and Lys-293 negatively regulates its transcriptional activity. Sumoylation at Lys-703 positively regulates its transcriptional activity in the presence of RWDD3. Sumoylation at Lys-277 and Lys-293 is dispensable whereas sumoylation at Lys-703 is critical for the stimulatory effect of RWDD3 on its transcriptional activity. Heat shock increases sumoylation in a RWDD3-dependent manner.

It localises to the cytoplasm. Its subcellular location is the nucleus. The protein localises to the mitochondrion. It is found in the cytoskeleton. The protein resides in the spindle. It localises to the microtubule organizing center. Its subcellular location is the centrosome. The protein localises to the chromosome. It is found in the nucleoplasm. Receptor for glucocorticoids (GC). Has a dual mode of action: as a transcription factor that binds to glucocorticoid response elements (GRE), both for nuclear and mitochondrial DNA, and as a modulator of other transcription factors. Affects inflammatory responses, cellular proliferation and differentiation in target tissues. Involved in chromatin remodeling. Plays a role in rapid mRNA degradation by binding to the 5' UTR of target mRNAs and interacting with PNRC2 in a ligand-dependent manner which recruits the RNA helicase UPF1 and the mRNA-decapping enzyme DCP1A, leading to RNA decay. Could act as a coactivator for STAT5-dependent transcription upon growth hormone (GH) stimulation and could reveal an essential role of hepatic GR in the control of body growth. Mediates glucocorticoid-induced apoptosis. Promotes accurate chromosome segregation during mitosis. May act as a tumor suppressor. May play a negative role in adipogenesis through the regulation of lipolytic and antilipogenic gene expression. This chain is Glucocorticoid receptor (NR3C1), found in Pongo abelii (Sumatran orangutan).